The sequence spans 68 residues: Large ribosomal subunit protein uL30 (68 aa).

Belongs to the universal ribosomal protein uL30 family. As to quaternary structure, part of the 50S ribosomal subunit.

The sequence is that of Large ribosomal subunit protein uL30 from Agrobacterium fabrum (strain C58 / ATCC 33970) (Agrobacterium tumefaciens (strain C58)).